Consider the following 318-residue polypeptide: Nodulation protein D 2 (318 aa).

Residues 6 to 63 enclose the HTH lysR-type domain; it reads LDLNLLVALDALTTERNLTAAARSINLSQPAMSAAIGRLRDYFRDELFTMNGRELRLT. A DNA-binding region (H-T-H motif) is located at residues 23-42; that stretch reads LTAAARSINLSQPAMSAAIG.

It belongs to the LysR transcriptional regulatory family.

Functionally, nodD regulates the expression of the nodABCFE genes which encode other nodulation proteins. NodD is also a negative regulator of its own expression. Binds flavonoids as inducers. This chain is Nodulation protein D 2 (nodD2), found in Rhizobium leguminosarum bv. phaseoli.